The chain runs to 189 residues: Ras-like protein rasG (189 aa).

10–17 lines the GTP pocket; that stretch reads GGGGVGKS. Residues 32 to 40 carry the Effector region motif; it reads YDPTIEDSY. GTP contacts are provided by residues 57 to 61 and 116 to 119; these read DTAGQ and NKCD. Positions 169–189 are disordered; sequence KGDSKPEKGKKKRPLKACTLL. Cys-186 carries the cysteine methyl ester modification. A lipid anchor (S-geranylgeranyl cysteine) is attached at Cys-186. Residues 187–189 constitute a propeptide, removed in mature form; that stretch reads TLL.

Belongs to the small GTPase superfamily. Ras family. As to quaternary structure, interacts with ripA.

It is found in the cell membrane. The enzyme catalyses GTP + H2O = GDP + phosphate + H(+). Alternates between an inactive form bound to GDP and an active form bound to GTP. Activated by a guanine nucleotide-exchange factor (GEF) and inactivated by a GTPase-activating protein (GAP). Functionally, ras proteins bind GDP/GTP and possess intrinsic GTPase activity. This is Ras-like protein rasG (rasG) from Dictyostelium discoideum (Social amoeba).